Consider the following 162-residue polypeptide: Zinc finger protein ZAT12 (162 aa).

C2H2-type zinc fingers lie at residues 39 to 61 (FTCK…RASH) and 82 to 104 (HPCP…MRRH).

As to expression, expressed in roots, stems and flowers.

It localises to the nucleus. Transcriptional repressor involved in light acclimation, cold and oxidative stress responses. May regulate a collection of transcripts involved in response to high-light, cold and oxidative stress. The sequence is that of Zinc finger protein ZAT12 (ZAT12) from Arabidopsis thaliana (Mouse-ear cress).